A 447-amino-acid polypeptide reads, in one-letter code: MTAHEVNFDGLVGLTHHYAGLSFGNEASTRHRFQMSNPRLAVKQGLLKMKALADAGFPQAVIPPHERPFIPALRQLGFTGSDEQILDKVARQAPRWLSSVSSASPMWVANAATVCPSADALDGKVHLTVANLNNKFHRALEVPVTEALLRAIFRDESQFSVHSALPQVALLGDEGAANHNRLGGEYGSAGVQLFVYGREEENEIRPARYPARQSREASEAVARLNQVNPQQVIFAQQNPEVIDQGVFHNDVIAVSNRQVLFCHEAAFARQKVLINQLRTRVDGFMAIEVPAGEVSVSDAVATYLFNSQLLSRDDGSMLLVLPRECQDHAGVWRYLNKLVAEDNPISAMQVFDLRESMANGGGPACLRLRVVLTEEERRAVNPAVMMNDALFTALNAWADRYYRDRLTAADLADPLLLREGREALDVLTRLLDLGSVYPFQQTGAADG.

Residues 19–28 (AGLSFGNEAS), Asn-110, and 137–138 (HR) each bind substrate. Residue Glu-174 is part of the active site. Arg-212 provides a ligand contact to substrate. His-248 is an active-site residue. Substrate-binding residues include Asp-250 and Asn-359. Residue Cys-365 is the Nucleophile of the active site.

Belongs to the succinylarginine dihydrolase family. As to quaternary structure, homodimer.

It carries out the reaction N(2)-succinyl-L-arginine + 2 H2O + 2 H(+) = N(2)-succinyl-L-ornithine + 2 NH4(+) + CO2. It functions in the pathway amino-acid degradation; L-arginine degradation via AST pathway; L-glutamate and succinate from L-arginine: step 2/5. Its function is as follows. Catalyzes the hydrolysis of N(2)-succinylarginine into N(2)-succinylornithine, ammonia and CO(2). The sequence is that of N-succinylarginine dihydrolase from Salmonella paratyphi B (strain ATCC BAA-1250 / SPB7).